The chain runs to 362 residues: Peptide chain release factor 1 (362 aa).

At Gln-237 the chain carries N5-methylglutamine.

The protein belongs to the prokaryotic/mitochondrial release factor family. Post-translationally, methylated by PrmC. Methylation increases the termination efficiency of RF1.

The protein localises to the cytoplasm. Its function is as follows. Peptide chain release factor 1 directs the termination of translation in response to the peptide chain termination codons UAG and UAA. The protein is Peptide chain release factor 1 of Vibrio atlanticus (strain LGP32) (Vibrio splendidus (strain Mel32)).